Consider the following 445-residue polypeptide: Phosphoglucosamine mutase (445 aa).

The active-site Phosphoserine intermediate is S102. The Mg(2+) site is built by S102, D241, D243, and D245. S102 is subject to Phosphoserine.

The protein belongs to the phosphohexose mutase family. The cofactor is Mg(2+). Activated by phosphorylation.

It carries out the reaction alpha-D-glucosamine 1-phosphate = D-glucosamine 6-phosphate. Functionally, catalyzes the conversion of glucosamine-6-phosphate to glucosamine-1-phosphate. This is Phosphoglucosamine mutase from Proteus mirabilis (strain HI4320).